We begin with the raw amino-acid sequence, 1374 residues long: DNA-directed RNA polymerase subunit beta (1374 aa).

Belongs to the RNA polymerase beta chain family. As to quaternary structure, the RNAP catalytic core consists of 2 alpha, 1 beta, 1 beta' and 1 omega subunit. When a sigma factor is associated with the core the holoenzyme is formed, which can initiate transcription.

The enzyme catalyses RNA(n) + a ribonucleoside 5'-triphosphate = RNA(n+1) + diphosphate. Its function is as follows. DNA-dependent RNA polymerase catalyzes the transcription of DNA into RNA using the four ribonucleoside triphosphates as substrates. The polypeptide is DNA-directed RNA polymerase subunit beta (Rickettsia typhi (strain ATCC VR-144 / Wilmington)).